The primary structure comprises 125 residues: Histone H2A, orphon (125 aa).

A compositionally biased stretch (basic residues) spans 1–18 (MSGRGKGGKVKAKAKSRS). A disordered region spans residues 1–21 (MSGRGKGGKVKAKAKSRSSRA). The residue at position 2 (serine 2) is an N-acetylserine. Serine 2 is modified (phosphoserine). Lysine 119 participates in a covalent cross-link: Glycyl lysine isopeptide (Lys-Gly) (interchain with G-Cter in ubiquitin).

Belongs to the histone H2A family. The nucleosome is a histone octamer containing two molecules each of H2A, H2B, H3 and H4 assembled in one H3-H4 heterotetramer and two H2A-H2B heterodimers. The octamer wraps approximately 147 bp of DNA. Post-translationally, monoubiquitination of Lys-119 gives a specific tag for epigenetic transcriptional repression. In terms of processing, phosphorylation on Ser-2 is enhanced during mitosis. Phosphorylation on Ser-2 directly represses transcription.

The protein localises to the nucleus. It is found in the chromosome. In terms of biological role, core component of nucleosome. Nucleosomes wrap and compact DNA into chromatin, limiting DNA accessibility to the cellular machineries which require DNA as a template. Histones thereby play a central role in transcription regulation, DNA repair, DNA replication and chromosomal stability. DNA accessibility is regulated via a complex set of post-translational modifications of histones, also called histone code, and nucleosome remodeling. This Chironomus thummi thummi (Midge) protein is Histone H2A, orphon.